The following is a 79-amino-acid chain: Acyl carrier protein (79 aa).

A Carrier domain is found at 6 to 79 (KEILDGLAEI…VQDVINYIQK (74 aa)). S41 carries the post-translational modification O-(pantetheine 4'-phosphoryl)serine.

It belongs to the acyl carrier protein (ACP) family. In terms of processing, 4'-phosphopantetheine is transferred from CoA to a specific serine of apo-ACP by AcpS. This modification is essential for activity because fatty acids are bound in thioester linkage to the sulfhydryl of the prosthetic group.

It is found in the cytoplasm. It functions in the pathway lipid metabolism; fatty acid biosynthesis. In terms of biological role, carrier of the growing fatty acid chain in fatty acid biosynthesis. The sequence is that of Acyl carrier protein from Thermobifida fusca (strain YX).